The following is a 268-amino-acid chain: Homeobox protein Hox-C4a (268 aa).

A disordered region spans residues 70-129 (PEPDTQRGHGLPHAGHLLGKGQSASCEPPPLPLSPATPSAASSACNQATPEHPNSSASAK). Composition is skewed to low complexity over residues 77–95 (GHGLPHAGHLLGKGQSASC) and 105–114 (ATPSAASSAC). Polar residues predominate over residues 115–128 (NQATPEHPNSSASA). The Antp-type hexapeptide signature appears at 133–138 (VYPWMK). The homeobox DNA-binding region spans 154–213 (PKRSRTAYTRQQVLELEKEFHYNRYLTRRRRIEIAHSLVLSERQIKIWFQNRRMKWKKDH). A disordered region spans residues 212–268 (DHRLPNTKVRSSSSTGISSGSNTSSAAGVVAAASTTNTMSASEDLSGTERGEDITRL). Low complexity predominate over residues 222–253 (SSSSTGISSGSNTSSAAGVVAAASTTNTMSAS). Basic and acidic residues predominate over residues 258–268 (GTERGEDITRL).

The protein belongs to the Antp homeobox family. Deformed subfamily.

Its subcellular location is the nucleus. In terms of biological role, sequence-specific transcription factor which is part of a developmental regulatory system that provides cells with specific positional identities on the anterior-posterior axis. This chain is Homeobox protein Hox-C4a (hoxc4a), found in Danio rerio (Zebrafish).